The sequence spans 350 residues: MARRISMATRTELVEAIIERYRSSCRADKQRILDEFVAVTGYHRKHAIRVLRPSESEPPCARQYAVRYGPEVREALVALWEASDRLCSKRLKPLIPILLPALERHGRLDLSTELRDKLLTVSAATMDRLLSEIRVVARGGQRRRAGMSSAVRRSVPVRTFGDWNDPLPGYVEVDFVAHSGTSSSGSFVQTMVLTDIATGWTECVPVRTRESGLVIAALNQARSLFPFPLQGVDFDNDSAFMNERVVCWCRSQGLEVTRSRAYRKNDQAWVEQKNGAIVRRLVGYGRLVGAEATAALGRLYDVVRLYGNLFQPSFKLREKTRIGARVVKRYHPPVPPIARGGCPFRCGRGR.

Residues N164–V327 form the Integrase catalytic domain.

This is an uncharacterized protein from Sinorhizobium fredii (strain NBRC 101917 / NGR234).